Here is a 2748-residue protein sequence, read N- to C-terminus: Nuclear migration protein NUM1 (2748 aa).

The span at 1–10 (MSHNNRHKKN) shows a compositional bias: basic residues. 2 disordered regions span residues 1–36 (MSHN…VSTN) and 290–312 (YYQK…GTTS). A compositionally biased stretch (polar residues) spans 17–36 (AGQYANSIDNSLSQESVSTN). A compositionally biased stretch (low complexity) spans 293–304 (KQHTSDTTVTSD). Tandem repeats lie at residues 593–656 (PSLE…KLEQ), 657–727 (PSLE…EVEQ), 728–798 (PSLA…EVEQ), 799–862 (PSLA…KLEQ), 863–926 (PSLA…KLEQ), 927–990 (PSLA…KLEQ), 991–1054 (PSLE…KLEQ), 1055–1118 (PSLE…KLEQ), 1119–1182 (PSLE…KLEQ), 1183–1246 (PSLA…KLEQ), 1247–1310 (PSLA…KLEQ), and 1311–1374 (PSLE…KLEQ). A 13 X tandem repeats region spans residues 593-1384 (PSLEYLVEHA…PSLEYLVKHA (792 aa)). Phosphoserine is present on residues Ser611, Ser675, and Ser746. Residues Ser881, Ser945, and Ser1009 each carry the phosphoserine modification. Ser1201, Ser1265, and Ser1329 each carry phosphoserine. A 13; truncated repeat occupies 1375 to 1384 (PSLEYLVKHA). The disordered stretch occupies residues 2111 to 2133 (ERAERIDEQSINTTSSNSTTTSS). The segment covering 2122-2133 (NTTSSNSTTTSS) has biased composition (low complexity). Ser2162, Ser2164, Ser2197, Ser2217, Ser2220, Ser2221, Ser2360, and Ser2424 each carry phosphoserine. Basic and acidic residues predominate over residues 2444 to 2460 (KEDKKGQATASKHEYVS). Residues 2444–2536 (KEDKKGQATA…HSSRNTPASR (93 aa)) form a disordered region. Residues 2465–2474 (NKTSTVSTKS) are compositionally biased toward polar residues. Basic and acidic residues predominate over residues 2492–2503 (SESHPQIEEQSH). Phosphoserine is present on Ser2494. A compositionally biased stretch (basic residues) spans 2504–2514 (RTNHHKHHKRQ). The span at 2516–2532 (SLNSNSTSKTTHSSRNT) shows a compositional bias: low complexity. Ser2545 bears the Phosphoserine mark. The region spanning 2573–2683 (QTVIGEYLFK…WYNSLRYLLQ (111 aa)) is the PH domain. Residues 2707–2748 (IFPLPGENTKSSSKRLSASRRSVSTRSLRHRVPQSRSFGNLR) are disordered. Residues 2720 to 2730 (KRLSASRRSVS) show a composition bias toward low complexity.

Interacts with PAC11 when DYN1 is present, and TUB3.

The protein localises to the bud tip. Its function is as follows. Controls nuclear migration. NUM1 specifically controls the interaction of the bud neck cytoskeleton with the pre-divisional G2 nucleus. Functions in dynein-anchoring. During late anaphase forms dynein-interacting cortical microtubule capture sites at both cellular poles. This leads to dynein-dependent sliding of the microtubules in the bud. In Saccharomyces cerevisiae (strain ATCC 204508 / S288c) (Baker's yeast), this protein is Nuclear migration protein NUM1 (NUM1).